A 128-amino-acid polypeptide reads, in one-letter code: uncharacterized protein (128 aa).

This is an uncharacterized protein from Schizosaccharomyces pombe (strain 972 / ATCC 24843) (Fission yeast).